We begin with the raw amino-acid sequence, 411 residues long: Multifunctional CCA protein (411 aa).

Positions 8 and 11 each coordinate ATP. Residues Gly-8 and Arg-11 each coordinate CTP. Mg(2+) contacts are provided by Glu-21 and Asp-23. Arg-91, Arg-137, and Arg-140 together coordinate ATP. Residues Arg-91, Arg-137, and Arg-140 each contribute to the CTP site. The region spanning 228–329 (TGVHALLALE…LKTLLALDGL (102 aa)) is the HD domain.

Belongs to the tRNA nucleotidyltransferase/poly(A) polymerase family. Bacterial CCA-adding enzyme type 1 subfamily. As to quaternary structure, monomer. Can also form homodimers and oligomers. Mg(2+) serves as cofactor. Ni(2+) is required as a cofactor.

It carries out the reaction a tRNA precursor + 2 CTP + ATP = a tRNA with a 3' CCA end + 3 diphosphate. The catalysed reaction is a tRNA with a 3' CCA end + 2 CTP + ATP = a tRNA with a 3' CCACCA end + 3 diphosphate. Functionally, catalyzes the addition and repair of the essential 3'-terminal CCA sequence in tRNAs without using a nucleic acid template. Adds these three nucleotides in the order of C, C, and A to the tRNA nucleotide-73, using CTP and ATP as substrates and producing inorganic pyrophosphate. tRNA 3'-terminal CCA addition is required both for tRNA processing and repair. Also involved in tRNA surveillance by mediating tandem CCA addition to generate a CCACCA at the 3' terminus of unstable tRNAs. While stable tRNAs receive only 3'-terminal CCA, unstable tRNAs are marked with CCACCA and rapidly degraded. In Teredinibacter turnerae (strain ATCC 39867 / T7901), this protein is Multifunctional CCA protein.